A 408-amino-acid chain; its full sequence is Chaperonin GroEL (408 aa).

ATP contacts are provided by residues 30-33 (TLGP), Lys51, and 87-91 (DGTTT).

The protein belongs to the chaperonin (HSP60) family. In terms of assembly, forms a cylinder of 14 subunits composed of two heptameric rings stacked back-to-back. Interacts with the co-chaperonin GroES.

It localises to the cytoplasm. It carries out the reaction ATP + H2O + a folded polypeptide = ADP + phosphate + an unfolded polypeptide.. Functionally, together with its co-chaperonin GroES, plays an essential role in assisting protein folding. The GroEL-GroES system forms a nano-cage that allows encapsulation of the non-native substrate proteins and provides a physical environment optimized to promote and accelerate protein folding. This chain is Chaperonin GroEL, found in Rickettsia rickettsii.